Reading from the N-terminus, the 441-residue chain is Ribulose bisphosphate carboxylase large chain (441 aa).

The residue at position 5 (Lys-5) is an N6,N6,N6-trimethyllysine. Positions 114 and 164 each coordinate substrate. Lys-166 serves as the catalytic Proton acceptor. Lys-168 contacts substrate. Positions 192, 194, and 195 each coordinate Mg(2+). Lys-192 carries the post-translational modification N6-carboxylysine. The active-site Proton acceptor is His-285. Arg-286, His-318, and Ser-370 together coordinate substrate.

The protein belongs to the RuBisCO large chain family. Type I subfamily. In terms of assembly, heterohexadecamer of 8 large chains and 8 small chains; disulfide-linked. The disulfide link is formed within the large subunit homodimers. The cofactor is Mg(2+). In terms of processing, the disulfide bond which can form in the large chain dimeric partners within the hexadecamer appears to be associated with oxidative stress and protein turnover.

The protein localises to the plastid. It is found in the chloroplast. The enzyme catalyses 2 (2R)-3-phosphoglycerate + 2 H(+) = D-ribulose 1,5-bisphosphate + CO2 + H2O. It carries out the reaction D-ribulose 1,5-bisphosphate + O2 = 2-phosphoglycolate + (2R)-3-phosphoglycerate + 2 H(+). RuBisCO catalyzes two reactions: the carboxylation of D-ribulose 1,5-bisphosphate, the primary event in carbon dioxide fixation, as well as the oxidative fragmentation of the pentose substrate in the photorespiration process. Both reactions occur simultaneously and in competition at the same active site. The protein is Ribulose bisphosphate carboxylase large chain of Drosera petiolaris (Woolly sundew).